A 92-amino-acid chain; its full sequence is YcgL domain-containing protein VC_1957 (92 aa).

The YcgL domain maps to M1–K84. Residues F69–P92 are disordered.

In Vibrio cholerae serotype O1 (strain ATCC 39315 / El Tor Inaba N16961), this protein is YcgL domain-containing protein VC_1957.